A 43-amino-acid polypeptide reads, in one-letter code: Metallothionein-3 (43 aa).

Belongs to the metallothionein superfamily. Type 5 family.

Its function is as follows. This protein binds cations of several transition elements. Thought to be involved in metal ion homeostasis. This chain is Metallothionein-3 (MtnC), found in Drosophila melanogaster (Fruit fly).